The following is a 184-amino-acid chain: V-type proton ATPase subunit E (184 aa).

The protein belongs to the V-ATPase E subunit family.

In terms of biological role, produces ATP from ADP in the presence of a proton gradient across the membrane. The protein is V-type proton ATPase subunit E of Finegoldia magna (strain ATCC 29328 / DSM 20472 / WAL 2508) (Peptostreptococcus magnus).